Here is a 437-residue protein sequence, read N- to C-terminus: ATP-dependent RNA helicase RhlB (437 aa).

The short motif at 9–37 is the Q motif element; it reads QKFADLGLQPQVTEGLEKKGFEYCTPIQA. The 180-residue stretch at 40–219 folds into the Helicase ATP-binding domain; sequence LPVLLTGQDI…FEHMHNPEHV (180 aa). 53–60 contributes to the ATP binding site; it reads AQTGTGKT. A DEAD box motif is present at residues 165–168; it reads DEAD. Positions 245-390 constitute a Helicase C-terminal domain; it reads ALLQTLIEEE…VSEYDASALI (146 aa). The disordered stretch occupies residues 397 to 437; sequence IRMRAPRVQQRRTNTGGTRSGNRKPQGRRPRQPRQSAPKQS. Residues 417 to 428 are compositionally biased toward basic residues; sequence GNRKPQGRRPRQ.

The protein belongs to the DEAD box helicase family. RhlB subfamily. In terms of assembly, component of the RNA degradosome, which is a multiprotein complex involved in RNA processing and mRNA degradation.

The protein localises to the cytoplasm. The enzyme catalyses ATP + H2O = ADP + phosphate + H(+). Its function is as follows. DEAD-box RNA helicase involved in RNA degradation. Has RNA-dependent ATPase activity and unwinds double-stranded RNA. The polypeptide is ATP-dependent RNA helicase RhlB (Vibrio parahaemolyticus serotype O3:K6 (strain RIMD 2210633)).